The sequence spans 610 residues: Ubiquilin-like protein (610 aa).

Residues 31–105 (IRVIVKTPGN…IHVVIKSKHG (75 aa)) enclose the Ubiquitin-like domain. One can recognise a UBA domain in the interval 562–607 (QAPEVRFSKEMECLQAMGFVNYNANLQALIATDGDTNAAIYKLKSS).

The protein is Ubiquilin-like protein (Ubqlnl) of Mus musculus (Mouse).